The following is a 416-amino-acid chain: tRNA (guanine-N(7)-)-methyltransferase non-catalytic subunit wuho (416 aa).

The disordered stretch occupies residues 47-88; sequence TQSQESCPATATSTTAGKEPGGKEQQLAKQPEEGGTSASGSV. The segment covering 49-62 has biased composition (polar residues); sequence SQESCPATATSTTA. 4 WD repeats span residues 89–130, 177–216, 220–258, and 317–357; these read ATST…ARLL, GHLS…DIHS, GHRE…ELLQ, and AGSW…PTTN.

It belongs to the WD repeat TRM82 family. In terms of assembly, forms a heterodimer with the catalytic subunit Mettl1. Interacts with mei-P26 and weakly interacts with bgcn; required for the function or formation of the mei-P26-bgcn-bam-sxl complex. Interacts with nanos; may be involved in mei-P26-dependent derepression of the BMP signaling pathway. Interacts with Myc; the interaction may be mediated by mei-P26 and may be involved in the regulation of ribosome biogenesis. In terms of tissue distribution, in testis, it is present at high level in hub cells, a niche for germline stem cells of testis. Ubiquitously expressed in all testicular cells throughout spermatogenesis. Ubiquitously expressed in all germline and somatic cells of the ovary.

It is found in the nucleus. Its subcellular location is the cytoplasm. The protein operates within tRNA modification; N(7)-methylguanine-tRNA biosynthesis. Its function is as follows. Required for the Mettl1-dependent formation of N(7)-methylguanine at position 46 (m7G46) in tRNA. In the Mettl1-wuho methyltransferase complex, it is required to stabilize and induce conformational changes of the catalytic subunit. Required for binding of nanos mRNA and repression of translation by the mei-P26-bgcn-bam-sxl complex. May cooperate with mei-P26 and nanos to derepress the BMP signaling pathway. May cooperate with mei-P26 to suppress expression of a subset of microRNAs. May cooperate with mei-P26 to regulate bam expression levels in germline cells during gametogenesis. Required to promote mitosis to meiosis transition during gametogenesis. May regulate germline cell division in part by regulating ribosome biogenesis. This Drosophila erecta (Fruit fly) protein is tRNA (guanine-N(7)-)-methyltransferase non-catalytic subunit wuho.